The chain runs to 159 residues: Cytochrome c-type biogenesis protein CcmE (159 aa).

Topologically, residues 1–8 (MNIRRKNR) are cytoplasmic. A helical; Signal-anchor for type II membrane protein transmembrane segment spans residues 9–29 (LWIACAVLAGLALTIGLVLYA). Over 30–159 (LRSNIDLFYT…PASVYKDPAS (130 aa)) the chain is Periplasmic. Positions 130 and 134 each coordinate heme. A compositionally biased stretch (basic and acidic residues) spans 134–147 (YTPPEVEKAMEANH). The disordered stretch occupies residues 134–159 (YTPPEVEKAMEANHRRPASVYKDPAS).

The protein belongs to the CcmE/CycJ family.

The protein localises to the cell inner membrane. In terms of biological role, heme chaperone required for the biogenesis of c-type cytochromes. Transiently binds heme delivered by CcmC and transfers the heme to apo-cytochromes in a process facilitated by CcmF and CcmH. The sequence is that of Cytochrome c-type biogenesis protein CcmE from Escherichia coli (strain SMS-3-5 / SECEC).